Reading from the N-terminus, the 89-residue chain is uncharacterized protein (89 aa).

It to Rhizobium NGR234A y4oN.

This is an uncharacterized protein from Sinorhizobium fredii (strain NBRC 101917 / NGR234).